Reading from the N-terminus, the 187-residue chain is Elongation factor P (187 aa).

It belongs to the elongation factor P family.

The protein resides in the cytoplasm. Its pathway is protein biosynthesis; polypeptide chain elongation. Involved in peptide bond synthesis. Stimulates efficient translation and peptide-bond synthesis on native or reconstituted 70S ribosomes in vitro. Probably functions indirectly by altering the affinity of the ribosome for aminoacyl-tRNA, thus increasing their reactivity as acceptors for peptidyl transferase. The protein is Elongation factor P of Nocardia farcinica (strain IFM 10152).